A 140-amino-acid polypeptide reads, in one-letter code: UPF0132 membrane protein MJ1527 (140 aa).

3 helical membrane-spanning segments follow: residues 40-60 (MEGV…LLLE), 70-90 (AMQS…VSAI), and 92-112 (IIGW…WIVG).

Belongs to the UPF0132 family.

Its subcellular location is the cell membrane. The protein is UPF0132 membrane protein MJ1527 of Methanocaldococcus jannaschii (strain ATCC 43067 / DSM 2661 / JAL-1 / JCM 10045 / NBRC 100440) (Methanococcus jannaschii).